A 347-amino-acid chain; its full sequence is D-alanine--D-alanine ligase (347 aa).

Residues lysine 138–alanine 339 enclose the ATP-grasp domain. An ATP-binding site is contributed by serine 171–phenylalanine 226. Residues aspartate 296, glutamate 308, and asparagine 310 each contribute to the Mg(2+) site.

The protein belongs to the D-alanine--D-alanine ligase family. It depends on Mg(2+) as a cofactor. The cofactor is Mn(2+).

The protein localises to the cytoplasm. The enzyme catalyses 2 D-alanine + ATP = D-alanyl-D-alanine + ADP + phosphate + H(+). Its pathway is cell wall biogenesis; peptidoglycan biosynthesis. Cell wall formation. This Tropheryma whipplei (strain TW08/27) (Whipple's bacillus) protein is D-alanine--D-alanine ligase.